We begin with the raw amino-acid sequence, 199 residues long: MTDLYAEALATFAALYAEAQNSAELEASAMTLATANVDGRPSARTVLLKAFDARGFVFYSHLDSAKGRDLQTHPQAALLFLWRSLREAGIQVRIEGGVQLVSADESDAYFASRPRMSQIGAWASLQSQTLGSRAEFDAAIAKVEATFEGREVPRPEGWGGFRVVPQAFEFWYGAKFRLHERWRYEADAASHWSKRMLYP.

Residues 44 to 49, 59 to 60, Lys66, and Gln91 contribute to the FMN site; these read RTVLLK and YS. Lys49 is a binding site for substrate. The substrate site is built by Tyr109, Arg113, and Ser117. FMN is bound by residues 126–127 and Trp171; that span reads QS. Residue 177–179 coordinates substrate; sequence RLH. Arg181 lines the FMN pocket.

This sequence belongs to the pyridoxamine 5'-phosphate oxidase family. Homodimer. FMN is required as a cofactor.

The catalysed reaction is pyridoxamine 5'-phosphate + O2 + H2O = pyridoxal 5'-phosphate + H2O2 + NH4(+). The enzyme catalyses pyridoxine 5'-phosphate + O2 = pyridoxal 5'-phosphate + H2O2. It participates in cofactor metabolism; pyridoxal 5'-phosphate salvage; pyridoxal 5'-phosphate from pyridoxamine 5'-phosphate: step 1/1. It functions in the pathway cofactor metabolism; pyridoxal 5'-phosphate salvage; pyridoxal 5'-phosphate from pyridoxine 5'-phosphate: step 1/1. Its function is as follows. Catalyzes the oxidation of either pyridoxine 5'-phosphate (PNP) or pyridoxamine 5'-phosphate (PMP) into pyridoxal 5'-phosphate (PLP). This chain is Pyridoxine/pyridoxamine 5'-phosphate oxidase, found in Xanthomonas oryzae pv. oryzae (strain KACC10331 / KXO85).